A 204-amino-acid polypeptide reads, in one-letter code: MSGKKKESGKFRSVLLIIILPLMFLLIAGGIVLWAAGINVLKPIQDAAAKTPVLKELVPETENKKGAASSKDSSNTAALEKTIKDQKSEISILNKDLETSKSEIDRLNQKIRSLEKTAEDQKKSSEDHTEGSADSKASSENDKVISVYKSMDSGKAAKIIAQLKEQEALKILNGLSKKQLADILAKMTPEQAATYTEKIAASQE.

Residues 115 to 140 (EKTAEDQKKSSEDHTEGSADSKASSE) are disordered.

The chain is FlaA locus 22.9 kDa protein (ylxF) from Bacillus subtilis (strain 168).